We begin with the raw amino-acid sequence, 471 residues long: D-hydantoinase (471 aa).

Residues histidine 58, histidine 60, and lysine 150 each contribute to the Zn(2+) site. Lysine 150 is subject to N6-carboxylysine. Tyrosine 155 lines the substrate pocket. 2 residues coordinate Zn(2+): histidine 183 and histidine 239. Serine 288 contributes to the substrate binding site. Zn(2+) is bound at residue aspartate 315. Asparagine 337 is a binding site for substrate.

Belongs to the metallo-dependent hydrolases superfamily. Hydantoinase/dihydropyrimidinase family. Homotetramer. It depends on Zn(2+) as a cofactor. The cofactor is Ni(2+). Co(2+) is required as a cofactor. Mn(2+) serves as cofactor. In terms of processing, carboxylation allows a single lysine to coordinate two zinc ions.

Its activity is regulated as follows. Completely inhibited by p-chloromercuribenzoate and partially inhibited by metal chelating agents. Functionally, catalyzes the stereospecific hydrolysis of the cyclic amide bond of D-hydantoin. Has no activity on dihydropyrimidines. This Geobacillus stearothermophilus (Bacillus stearothermophilus) protein is D-hydantoinase.